A 331-amino-acid chain; its full sequence is GATA transcription factor 12 (331 aa).

Disordered regions lie at residues 30–49 (ENDV…SSNF) and 105–138 (SGFK…SVPA). The segment covering 34–47 (VADSTTTTTITDSS) has biased composition (low complexity). Positions 116–134 (DTGSPENPNSSSPIFTTDV) are enriched in polar residues. Residues 139–146 (KARSKRSR) carry the Nuclear localization signal motif. Residues 174–218 (SSQQHLSPPTSPPLLMAPLGKKQAVDGGHRRKKDVSSPESGGAEE) are disordered. The segment at 215 to 269 (GAEERRCLHCATDKTPQWRTGPMGPKTLCNACGVRYKSGRLVPEYRPAASPTFVL) adopts a GATA-type zinc-finger fold.

Belongs to the type IV zinc-finger family. Class A subfamily. Expressed in the vascular cylinder of roots. Expressed in the differentiation zone of the root stele.

The protein resides in the nucleus. In terms of biological role, transcriptional activator that specifically binds 5'-GATA-3' or 5'-GAT-3' motifs within gene promoters. May be involved in the regulation of some light-responsive genes. Transcription activator involved in xylem formation. Functions upstream of NAC030/VND7, a master switch of xylem vessel differentiation. This is GATA transcription factor 12 from Arabidopsis thaliana (Mouse-ear cress).